A 208-amino-acid polypeptide reads, in one-letter code: Thymidylate kinase (208 aa).

G10–S17 contributes to the ATP binding site.

Belongs to the thymidylate kinase family.

The catalysed reaction is dTMP + ATP = dTDP + ADP. Phosphorylation of dTMP to form dTDP in both de novo and salvage pathways of dTTP synthesis. The sequence is that of Thymidylate kinase from Bacillus cytotoxicus (strain DSM 22905 / CIP 110041 / 391-98 / NVH 391-98).